A 243-amino-acid polypeptide reads, in one-letter code: Peptide deformylase, mitochondrial (243 aa).

Residues 1 to 39 (MARLWGALSLWPLWAAVPWGGAAAVGVRACSSTAAPDGV) constitute a mitochondrion transit peptide. Substrate is bound by residues Gly71, Pro169, and Gly171. Residues 165–175 (LVTFPEGCESV) are hydrophobic dimerization interface. 2 residues coordinate Co(2+): Cys172 and His214. Residue Glu215 is part of the active site. His218 is a binding site for Co(2+).

The protein belongs to the polypeptide deformylase family. As to quaternary structure, homodimer. Co(2+) serves as cofactor. Ubiquitous.

Its subcellular location is the mitochondrion. It catalyses the reaction N-terminal N-formyl-L-methionyl-[peptide] + H2O = N-terminal L-methionyl-[peptide] + formate. Its function is as follows. Removes the formyl group from the N-terminal Met of newly synthesized proteins. The chain is Peptide deformylase, mitochondrial from Homo sapiens (Human).